Reading from the N-terminus, the 354-residue chain is GTPase Obg (354 aa).

Residues 1–159 form the Obg domain; it reads MKFVDEVKIH…RDLVLELKLL (159 aa). In terms of domain architecture, OBG-type G spans 160 to 333; that stretch reads ADVGIVGYPN…LLDAVGRALF (174 aa). GTP contacts are provided by residues 166 to 173, 191 to 195, 212 to 215, 283 to 286, and 314 to 316; these read GYPNAGKS, FTTLT, DIPG, TKID, and SAV. Mg(2+) is bound by residues serine 173 and threonine 193.

It belongs to the TRAFAC class OBG-HflX-like GTPase superfamily. OBG GTPase family. As to quaternary structure, monomer. It depends on Mg(2+) as a cofactor.

It is found in the cytoplasm. Functionally, an essential GTPase which binds GTP, GDP and possibly (p)ppGpp with moderate affinity, with high nucleotide exchange rates and a fairly low GTP hydrolysis rate. Plays a role in control of the cell cycle, stress response, ribosome biogenesis and in those bacteria that undergo differentiation, in morphogenesis control. This is GTPase Obg from Anaeromyxobacter sp. (strain K).